The following is a 292-amino-acid chain: Nanos homolog 1 (292 aa).

Disordered stretches follow at residues 1-41 and 68-121; these read MEAF…QPFS and GGNG…SRGR. The tract at residues 40 to 56 is essential for its translational repressor activity; sequence FSSWNDYLGLATLITKA. Residues 76 to 87 show a composition bias toward low complexity; it reads PPSSSSSSCCSP. A compositionally biased stretch (acidic residues) spans 104–115; the sequence is DYDEDDDDDSDE. A Nanos-type zinc finger spans residues 213 to 267; sequence VCVFCRNNKEAMALYTTHILKGPDGRVLCPVLRRYTCPLCGASGDNAHTIKYCPL. Zn(2+) is bound by residues C214, C217, H230, C241, C249, C252, H260, and C265. 2 short sequence motifs (C2HC) span residues 214 to 241 and 249 to 265; these read CVFC…RVLC and CPLC…IKYC. The tract at residues 268-292 is disordered; that stretch reads SKVPPPPARPPPRSARDGPPGKKLR. The segment covering 269–280 has biased composition (pro residues); the sequence is KVPPPPARPPPR. A compositionally biased stretch (basic and acidic residues) spans 281–292; sequence SARDGPPGKKLR.

This sequence belongs to the nanos family. Interacts with PUM2, SNAPIN and CTNNB1. Interacts (via N-terminal region) with CTNND1. Interacts with DDX20 (via N-terminal region). Testis and ovary (at protein level). Predominantly expressed in testis. Specifically expressed during germline development. In adult tissues, it is mainly expressed in spermatogonia, the stem cells of the germline. Also expressed during meiosis in spermatocytes. Not present in late, post-meiotic stage germ cells. Expressed in fetal ovaries, while it is weakly or not expressed in mature postmeiotic oocytes, suggesting that it may be expressed in premeiotic female germ cells. Expressed at high levels only in the E-cadherin deficient cell lines. Highly expressed in lung carcinomas and mostly detected in invasive tumor cells and its expression correlates with tumor aggressiveness.

Its subcellular location is the cytoplasm. It is found in the perinuclear region. In terms of biological role, may act as a translational repressor which regulates translation of specific mRNAs by forming a complex with PUM2 that associates with the 3'-UTR of mRNA targets. Capable of interfering with the proadhesive and anti-invasive functions of E-cadherin. Up-regulates the production of MMP14 to promote tumor cell invasion. This Homo sapiens (Human) protein is Nanos homolog 1 (NANOS1).